A 624-amino-acid polypeptide reads, in one-letter code: Phosphatidylserine decarboxylase proenzyme 2 (624 aa).

A disordered region spans residues 1–30 (MGHSPSRHNACGGGGGDGESPPSPLPSRFE). One can recognise a C2 domain in the interval 16–129 (GDGESPPSPL…KDLDEHSEVL (114 aa)). 2 EF-hand domains span residues 156–191 (TEQSFARRVLAIVDYNEDGELSLSEFSDLMKAFGNK) and 192–227 (LAVAKIEELFRQADKNGDGIVDMDELAALLANQQEK). Positions 169, 171, 173, 175, 180, 205, 207, 209, and 216 each coordinate Ca(2+). Residues Asp-425, His-481, and Ser-569 each act as charge relay system; for autoendoproteolytic cleavage activity in the active site. Ser-569 serves as the catalytic Schiff-base intermediate with substrate; via pyruvic acid; for decarboxylase activity. Ser-569 carries the pyruvic acid (Ser); by autocatalysis modification.

The protein belongs to the phosphatidylserine decarboxylase family. PSD-B subfamily. Eukaryotic type II sub-subfamily. In terms of assembly, heterodimer of a large membrane-associated beta subunit and a small pyruvoyl-containing alpha subunit. Requires pyruvate as cofactor. Is synthesized initially as an inactive proenzyme. Formation of the active enzyme involves a self-maturation process in which the active site pyruvoyl group is generated from an internal serine residue via an autocatalytic post-translational modification. Two non-identical subunits are generated from the proenzyme in this reaction, and the pyruvate is formed at the N-terminus of the alpha chain, which is derived from the carboxyl end of the proenzyme. The autoendoproteolytic cleavage occurs by a canonical serine protease mechanism, in which the side chain hydroxyl group of the serine supplies its oxygen atom to form the C-terminus of the beta chain, while the remainder of the serine residue undergoes an oxidative deamination to produce ammonia and the pyruvoyl prosthetic group on the alpha chain. During this reaction, the Ser that is part of the protease active site of the proenzyme becomes the pyruvoyl prosthetic group, which constitutes an essential element of the active site of the mature decarboxylase.

Its subcellular location is the vacuole membrane. The protein localises to the endoplasmic reticulum membrane. The enzyme catalyses a 1,2-diacyl-sn-glycero-3-phospho-L-serine + H(+) = a 1,2-diacyl-sn-glycero-3-phosphoethanolamine + CO2. It participates in phospholipid metabolism; phosphatidylethanolamine biosynthesis; phosphatidylethanolamine from CDP-diacylglycerol: step 2/2. In terms of biological role, catalyzes the formation of phosphatidylethanolamine (PtdEtn) from phosphatidylserine (PtdSer). Plays a central role in phospholipid metabolism and in the interorganelle trafficking of phosphatidylserine. The polypeptide is Phosphatidylserine decarboxylase proenzyme 2 (Oryza sativa subsp. japonica (Rice)).